We begin with the raw amino-acid sequence, 194 residues long: Probable WRKY transcription factor 51 (194 aa).

The interval 58–97 is disordered; that stretch reads SSETFTGESGGSGSATTLSKKESTNRGSKESDQTKETGHR. The span at 76-96 shows a compositional bias: basic and acidic residues; it reads SKKESTNRGSKESDQTKETGH. The segment at residues 104–169 is a DNA-binding region (WRKY); sequence SKIDVMDDGF…YEGVHNHESL (66 aa).

The protein belongs to the WRKY group II-c family. Interacts with CAMBP25/VQ15.

The protein localises to the nucleus. Its function is as follows. Transcription factor. Interacts specifically with the W box (5'-(T)TGAC[CT]-3'), a frequently occurring elicitor-responsive cis-acting element. Involved in defense responses. May act as positive regulator of salicylic acid (SA)-mediated signaling and negative regulator of jasmonic acid (JA)-mediated signaling. The sequence is that of Probable WRKY transcription factor 51 (WRKY51) from Arabidopsis thaliana (Mouse-ear cress).